Reading from the N-terminus, the 508-residue chain is Putative inorganic phosphate transporter 1-13 (508 aa).

Over 1–22 (MAGNQQLRVLHALDIARTQLYH) the chain is Cytoplasmic. A helical transmembrane segment spans residues 23–43 (FIAIVIAGMGFFTDAYDLFSI). Topologically, residues 44-64 (SLVADLLGHVYYHGELPRNIH) are extracellular. The chain crosses the membrane as a helical span at residues 65–85 (AAVTGIALCGTVPGQLVFGWL). Residues 86–93 (GDKMGRKR) lie on the Cytoplasmic side of the membrane. Residues 94–114 (VYGITLLLMVVSSLASGLSFS) form a helical membrane-spanning segment. Over 115–117 (KHE) the chain is Extracellular. Residues 118 to 138 (GMNIIAVLCFFRFWLGVSIGG) traverse the membrane as a helical segment. At 139–159 (DYPLSATIMSEYANKRTRGAF) the chain is on the cytoplasmic side. The chain crosses the membrane as a helical span at residues 160 to 180 (IAAVFAMQGFGNLAAGIIGMI). Residues 181-192 (VSAAFKHSSASK) are Extracellular-facing. Residues 193–213 (IDYAWRIILMFGAIPAALTYH) traverse the membrane as a helical segment. At 214–277 (WRMKMPETAR…FEFLHRHGLH (64 aa)) the chain is on the cytoplasmic side. The chain crosses the membrane as a helical span at residues 278-298 (LLGTTVCWFVLDVTFYSLNIF). Residues 299-328 (MKNIFTEVGLLPRLDSEYHHTLQRMITMTA) lie on the Extracellular side of the membrane. The helical transmembrane segment at 329–349 (VHTFISLCGALPGYFFTVAFV) threads the bilayer. Residues 350–354 (DRIGR) are Cytoplasmic-facing. A helical transmembrane segment spans residues 355–375 (VKIQLIGFTMMTVFMLCLAIP). The Extracellular portion of the chain corresponds to 376-389 (YDQWLRHKNKYGFA). The chain crosses the membrane as a helical span at residues 390-410 (VMYGLTFFFANFGPNTTTFII). Topologically, residues 411-424 (PAEIFPARLRSTCH) are cytoplasmic. A helical membrane pass occupies residues 425-445 (GISGAVGKIGAIVGVFGFLYT). Topologically, residues 446–450 (EYHIR) are extracellular. The chain crosses the membrane as a helical span at residues 451–471 (IFLFVLIGCNLVGFIFTLLLP). The Cytoplasmic portion of the chain corresponds to 472–508 (ESKGKSLEDLTGEIEEFQEEDEGSEVALSRPIHTVPL).

It belongs to the major facilitator superfamily. Phosphate:H(+) symporter (TC 2.A.1.9) family.

The protein resides in the membrane. Its function is as follows. High-affinity transporter for external inorganic phosphate. This Oryza sativa subsp. japonica (Rice) protein is Putative inorganic phosphate transporter 1-13 (PHT1-13).